The following is a 309-amino-acid chain: 5-oxoprolinase subunit C (309 aa).

This sequence belongs to the PxpC family. As to quaternary structure, forms a complex composed of PxpA, PxpB and PxpC.

It carries out the reaction 5-oxo-L-proline + ATP + 2 H2O = L-glutamate + ADP + phosphate + H(+). Its function is as follows. Catalyzes the cleavage of 5-oxoproline to form L-glutamate coupled to the hydrolysis of ATP to ADP and inorganic phosphate. This chain is 5-oxoprolinase subunit C, found in Haemophilus influenzae (strain ATCC 51907 / DSM 11121 / KW20 / Rd).